The sequence spans 113 residues: Ribonuclease P protein component (113 aa).

This sequence belongs to the RnpA family. In terms of assembly, consists of a catalytic RNA component (M1 or rnpB) and a protein subunit.

It carries out the reaction Endonucleolytic cleavage of RNA, removing 5'-extranucleotides from tRNA precursor.. Its function is as follows. RNaseP catalyzes the removal of the 5'-leader sequence from pre-tRNA to produce the mature 5'-terminus. It can also cleave other RNA substrates such as 4.5S RNA. The protein component plays an auxiliary but essential role in vivo by binding to the 5'-leader sequence and broadening the substrate specificity of the ribozyme. This is Ribonuclease P protein component from Clostridium novyi (strain NT).